The chain runs to 596 residues: Elongation factor 4 (596 aa).

Positions 2 to 183 (KNIRNFSIIA…TIITKIPAPK (182 aa)) constitute a tr-type G domain. Residues 14–19 (DHGKST) and 130–133 (NKID) each bind GTP.

The protein belongs to the TRAFAC class translation factor GTPase superfamily. Classic translation factor GTPase family. LepA subfamily.

The protein localises to the cell inner membrane. It catalyses the reaction GTP + H2O = GDP + phosphate + H(+). Required for accurate and efficient protein synthesis under certain stress conditions. May act as a fidelity factor of the translation reaction, by catalyzing a one-codon backward translocation of tRNAs on improperly translocated ribosomes. Back-translocation proceeds from a post-translocation (POST) complex to a pre-translocation (PRE) complex, thus giving elongation factor G a second chance to translocate the tRNAs correctly. Binds to ribosomes in a GTP-dependent manner. The polypeptide is Elongation factor 4 (Campylobacter lari (strain RM2100 / D67 / ATCC BAA-1060)).